Consider the following 106-residue polypeptide: uncharacterized protein (106 aa).

Belongs to the HesB/IscA family.

This is an uncharacterized protein from Rhodobacter capsulatus (Rhodopseudomonas capsulata).